A 233-amino-acid chain; its full sequence is Opacity protein opA67 (233 aa).

Ala1 is a signal peptide.

It belongs to the opacity porin family.

Its subcellular location is the cell outer membrane. Its function is as follows. Implicated in a number of adherence functions. OPA proteins are implicated in pathogenesis and are subject to phase variation. In Neisseria gonorrhoeae, this protein is Opacity protein opA67.